The sequence spans 257 residues: Peptide methionine sulfoxide reductase (257 aa).

The disordered stretch occupies residues 61 to 88; that stretch reads LGFGSRPQPDPAASSAIAQGPDDDVPSP. Ser-244 carries the phosphoserine modification.

The protein belongs to the MsrA Met sulfoxide reductase family.

The catalysed reaction is L-methionyl-[protein] + [thioredoxin]-disulfide + H2O = L-methionyl-(S)-S-oxide-[protein] + [thioredoxin]-dithiol. The enzyme catalyses [thioredoxin]-disulfide + L-methionine + H2O = L-methionine (S)-S-oxide + [thioredoxin]-dithiol. In terms of biological role, has an important function as a repair enzyme for proteins that have been inactivated by oxidation. Catalyzes the reversible oxidation-reduction of methionine sulfoxide in proteins to methionine. The polypeptide is Peptide methionine sulfoxide reductase (PMSR) (Brassica napus (Rape)).